We begin with the raw amino-acid sequence, 207 residues long: Small ribosomal subunit protein uS4 (207 aa).

The tract at residues 22-54 (KSARRSISDKSKFESKPGQHGRTSGSRTSDFGL) is disordered. Residues 27 to 38 (SISDKSKFESKP) show a composition bias toward basic and acidic residues. A compositionally biased stretch (polar residues) spans 42 to 52 (GRTSGSRTSDF). Residues 97-157 (SRLDNVVYRM…EKSKKQLRII (61 aa)) form the S4 RNA-binding domain.

Belongs to the universal ribosomal protein uS4 family. As to quaternary structure, part of the 30S ribosomal subunit. Contacts protein S5. The interaction surface between S4 and S5 is involved in control of translational fidelity.

In terms of biological role, one of the primary rRNA binding proteins, it binds directly to 16S rRNA where it nucleates assembly of the body of the 30S subunit. Functionally, with S5 and S12 plays an important role in translational accuracy. The chain is Small ribosomal subunit protein uS4 from Leptothrix cholodnii (strain ATCC 51168 / LMG 8142 / SP-6) (Leptothrix discophora (strain SP-6)).